A 422-amino-acid chain; its full sequence is Histidine--tRNA ligase (422 aa).

The protein belongs to the class-II aminoacyl-tRNA synthetase family. As to quaternary structure, homodimer.

Its subcellular location is the cytoplasm. The enzyme catalyses tRNA(His) + L-histidine + ATP = L-histidyl-tRNA(His) + AMP + diphosphate + H(+). This Vibrio atlanticus (strain LGP32) (Vibrio splendidus (strain Mel32)) protein is Histidine--tRNA ligase.